Here is a 340-residue protein sequence, read N- to C-terminus: DnaJ homolog subfamily B member 1 (340 aa).

In terms of domain architecture, J spans 2 to 70 (GKDYYQTLGL…REIFDRYGEE (69 aa)). A Phosphothreonine modification is found at threonine 307.

As to quaternary structure, interacts with DNAJC3. Interacts with HSF1 (via transactivation domain); this interaction results in the inhibition of heat shock- and HSF1-induced transcriptional activity during the attenuation and recovery phase period of the heat shock response. Interacts with BAG3.

The protein resides in the cytoplasm. It is found in the nucleus. Its subcellular location is the nucleolus. In terms of biological role, interacts with HSP70 and can stimulate its ATPase activity. Stimulates the association between HSC70 and HIP. Negatively regulates heat shock-induced HSF1 transcriptional activity during the attenuation and recovery phase period of the heat shock response. Stimulates ATP hydrolysis and the folding of unfolded proteins mediated by HSPA1A/B (in vitro). The sequence is that of DnaJ homolog subfamily B member 1 (Dnajb1) from Mus musculus (Mouse).